An 86-amino-acid polypeptide reads, in one-letter code: Cell division topological specificity factor (86 aa).

Belongs to the MinE family.

Functionally, prevents the cell division inhibition by proteins MinC and MinD at internal division sites while permitting inhibition at polar sites. This ensures cell division at the proper site by restricting the formation of a division septum at the midpoint of the long axis of the cell. This is Cell division topological specificity factor from Aliivibrio salmonicida (strain LFI1238) (Vibrio salmonicida (strain LFI1238)).